Here is a 402-residue protein sequence, read N- to C-terminus: Probable glutamate 5-kinase (402 aa).

Residues Ser58, Asp145, and Asn157 each contribute to the substrate site. ATP-binding positions include Thr177–Asp178 and Thr218–Lys224. A PUA domain is found at His295–Asn373.

Belongs to the glutamate 5-kinase family.

It is found in the cytoplasm. It catalyses the reaction L-glutamate + ATP = L-glutamyl 5-phosphate + ADP. The protein operates within amino-acid biosynthesis; L-proline biosynthesis; L-glutamate 5-semialdehyde from L-glutamate: step 1/2. Its function is as follows. Catalyzes the transfer of a phosphate group to glutamate to form glutamate 5-phosphate which rapidly cyclizes to 5-oxoproline. In Schizosaccharomyces pombe (strain 972 / ATCC 24843) (Fission yeast), this protein is Probable glutamate 5-kinase.